The chain runs to 458 residues: Probable alpha-L-glutamate ligase (458 aa).

Residues 1–162 form a unknown region; sequence MSDNKFIIGS…YGVKTAKKSG (162 aa). Residues 163-458 are alpha-L-glutamate ligase; that stretch reads LKIGLLASNP…IEKKLGWKAD (296 aa). Positions 267–450 constitute an ATP-grasp domain; that stretch reads LQLLQKNNLD…IAGAMIESIE (184 aa). ATP-binding positions include lysine 304, 341-342, aspartate 350, and 374-376; these read EF and RAN. 3 residues coordinate Mg(2+): aspartate 411, glutamate 423, and asparagine 425. 3 residues coordinate Mn(2+): aspartate 411, glutamate 423, and asparagine 425.

It in the C-terminal section; belongs to the RimK family. The cofactor is Mg(2+). Requires Mn(2+) as cofactor.

The sequence is that of Probable alpha-L-glutamate ligase from Shewanella pealeana (strain ATCC 700345 / ANG-SQ1).